Reading from the N-terminus, the 361-residue chain is UDP-3-O-acylglucosamine N-acyltransferase (361 aa).

Catalysis depends on H253, which acts as the Proton acceptor.

It belongs to the transferase hexapeptide repeat family. LpxD subfamily. In terms of assembly, homotrimer.

It carries out the reaction a UDP-3-O-[(3R)-3-hydroxyacyl]-alpha-D-glucosamine + a (3R)-hydroxyacyl-[ACP] = a UDP-2-N,3-O-bis[(3R)-3-hydroxyacyl]-alpha-D-glucosamine + holo-[ACP] + H(+). It functions in the pathway bacterial outer membrane biogenesis; LPS lipid A biosynthesis. Catalyzes the N-acylation of UDP-3-O-acylglucosamine using 3-hydroxyacyl-ACP as the acyl donor. Is involved in the biosynthesis of lipid A, a phosphorylated glycolipid that anchors the lipopolysaccharide to the outer membrane of the cell. In Burkholderia pseudomallei (strain 1710b), this protein is UDP-3-O-acylglucosamine N-acyltransferase.